Consider the following 489-residue polypeptide: Lysine-specific permease LysP (489 aa).

Residues 2 to 22 (VSETKTTEAPGLRRELKARHL) are Cytoplasmic-facing. A helical transmembrane segment spans residues 23-43 (TMIAIGGSIGTGLFVASGATI). The Periplasmic segment spans residues 44-45 (SQ). The helical transmembrane segment at 46-66 (AGPGGALLSYMLIGLMVYFLM) threads the bilayer. The Cytoplasmic portion of the chain corresponds to 67 to 105 (TSLGELAAYMPVSGSFATYGQNYVEEGFGFALGWNYWYN). Residues 106–126 (WAVTIAVDLVAAQLVMSWWFP) form a helical membrane-spanning segment. Residues 127–128 (DT) lie on the Periplasmic side of the membrane. The helical transmembrane segment at 129–149 (PGWIWSALFLGVIFLLNYISV) threads the bilayer. The Cytoplasmic portion of the chain corresponds to 150-161 (RGFGEAEYWFSL). The helical transmembrane segment at 162 to 182 (IKVTTVIVFIIVGVLMIIGIF) threads the bilayer. At 183 to 197 (KGAQPAGWSNWTIGE) the chain is on the periplasmic side. Residues 198–218 (APFAGGFAAMIGVAMIVGFSF) traverse the membrane as a helical segment. Residues 219-244 (QGTELIGIAAGESEDPAKNIPRAVRQ) are Cytoplasmic-facing. A helical transmembrane segment spans residues 245–265 (VFWRILLFYVFAILIISLIIP). Residues 266–290 (YTDPSLLRNDVKDISVSPFTLVFQH) are Periplasmic-facing. Residues 291–311 (AGLLSAAAVMNAVILTAVLSA) form a helical membrane-spanning segment. At 312–346 (GNSGMYASTRMLYTLACDGKAPRIFAKLSRGGVPR) the chain is on the cytoplasmic side. Residues 347–367 (NALYATTVIAGLCFLTSMFGN) traverse the membrane as a helical segment. The Periplasmic portion of the chain corresponds to 368–370 (QTV). A helical transmembrane segment spans residues 371 to 391 (YLWLLNTSGMTGFIAWLGIAI). At 392–413 (SHYRFRRGYVLQGHDINDLPYR) the chain is on the cytoplasmic side. A helical transmembrane segment spans residues 414–434 (SGFFPLGPIFAFILCLIITLG). Topologically, residues 435-446 (QNYEAFLKDTID) are periplasmic. Residues 447 to 467 (WGGVAATYIGIPLFLIIWFGY) form a helical membrane-spanning segment. Residues 468–489 (KLIKGTHFVRYSEMKFPQNDKK) are Cytoplasmic-facing.

This sequence belongs to the amino acid-polyamine-organocation (APC) superfamily. Amino acid transporter (AAT) (TC 2.A.3.1) family. In terms of assembly, interacts strongly with the transcriptional activator CadC in the absence of lysine or at low lysine concentrations. Interaction is markedly attenuated under increasing lysine levels. Concomitant pH-dependent protonation of periplasmic amino acids in both proteins dissolves their electrostatic connections resulting in further destabilization of the CadC/LysP interaction. Low pH promotes oligomerization of LysP.

The protein localises to the cell inner membrane. It catalyses the reaction L-lysine(out) + H(+)(out) = L-lysine(in) + H(+)(in). Its function is as follows. Permease involved in lysine uptake. In addition, functions as a lysine sensor that mediates the lysine-dependent regulation of the transcriptional activator CadC. In the absence of lysine, or at low lysine concentrations, LysP inhibits CadC by an interaction with the transmembrane domain of CadC. In the presence of lysine, LysP loses its ability to interact with and inhibit CadC, and acts as a lysine permease. The polypeptide is Lysine-specific permease LysP (Escherichia coli (strain K12)).